Consider the following 169-residue polypeptide: uncharacterized protein (169 aa).

One can recognise a Nudix hydrolase domain in the interval 32–162 (CNFRVVNSFV…EPAKSDLIKL (131 aa)). Residues 69–91 (GGHVESGETYEDALQRELEEELN) carry the Nudix box motif. Residues glutamate 85 and glutamate 89 each coordinate Mg(2+).

Belongs to the Nudix hydrolase family. Mg(2+) is required as a cofactor.

This is an uncharacterized protein from Nostoc sp. (strain PCC 7120 / SAG 25.82 / UTEX 2576).